Here is a 298-residue protein sequence, read N- to C-terminus: Phosphatidylserine decarboxylase proenzyme (298 aa).

Residues Asp-113, His-169, and Ser-256 each act as charge relay system; for autoendoproteolytic cleavage activity in the active site. Catalysis depends on Ser-256, which acts as the Schiff-base intermediate with substrate; via pyruvic acid; for decarboxylase activity. Ser-256 is modified (pyruvic acid (Ser); by autocatalysis).

This sequence belongs to the phosphatidylserine decarboxylase family. PSD-B subfamily. Prokaryotic type II sub-subfamily. Heterodimer of a large membrane-associated beta subunit and a small pyruvoyl-containing alpha subunit. The cofactor is pyruvate. In terms of processing, is synthesized initially as an inactive proenzyme. Formation of the active enzyme involves a self-maturation process in which the active site pyruvoyl group is generated from an internal serine residue via an autocatalytic post-translational modification. Two non-identical subunits are generated from the proenzyme in this reaction, and the pyruvate is formed at the N-terminus of the alpha chain, which is derived from the carboxyl end of the proenzyme. The autoendoproteolytic cleavage occurs by a canonical serine protease mechanism, in which the side chain hydroxyl group of the serine supplies its oxygen atom to form the C-terminus of the beta chain, while the remainder of the serine residue undergoes an oxidative deamination to produce ammonia and the pyruvoyl prosthetic group on the alpha chain. During this reaction, the Ser that is part of the protease active site of the proenzyme becomes the pyruvoyl prosthetic group, which constitutes an essential element of the active site of the mature decarboxylase.

It localises to the cell membrane. It catalyses the reaction a 1,2-diacyl-sn-glycero-3-phospho-L-serine + H(+) = a 1,2-diacyl-sn-glycero-3-phosphoethanolamine + CO2. It participates in phospholipid metabolism; phosphatidylethanolamine biosynthesis; phosphatidylethanolamine from CDP-diacylglycerol: step 2/2. Its function is as follows. Catalyzes the formation of phosphatidylethanolamine (PtdEtn) from phosphatidylserine (PtdSer). In Desulfitobacterium hafniense (strain Y51), this protein is Phosphatidylserine decarboxylase proenzyme.